Reading from the N-terminus, the 126-residue chain is MSFPIDSIKIKVESHFLAQQSSLLEGKYVFSYTVTIVNLSDINVTLKSRHWIITDANGAESQVKGPGVVGETPTIAPNNAYQYTSGTVFETPVGFMHGRYTMESGLGETFEASIPSFRLAMPGVMQ.

Residues 2–126 enclose the ApaG domain; that stretch reads SFPIDSIKIK…FRLAMPGVMQ (125 aa).

The polypeptide is Protein ApaG (Shewanella denitrificans (strain OS217 / ATCC BAA-1090 / DSM 15013)).